The primary structure comprises 493 residues: Glutamyl-tRNA(Gln) amidotransferase subunit A (493 aa).

Catalysis depends on charge relay system residues K79 and S159. The active-site Acyl-ester intermediate is S183.

The protein belongs to the amidase family. GatA subfamily. As to quaternary structure, heterotrimer of A, B and C subunits.

It carries out the reaction L-glutamyl-tRNA(Gln) + L-glutamine + ATP + H2O = L-glutaminyl-tRNA(Gln) + L-glutamate + ADP + phosphate + H(+). Functionally, allows the formation of correctly charged Gln-tRNA(Gln) through the transamidation of misacylated Glu-tRNA(Gln) in organisms which lack glutaminyl-tRNA synthetase. The reaction takes place in the presence of glutamine and ATP through an activated gamma-phospho-Glu-tRNA(Gln). The polypeptide is Glutamyl-tRNA(Gln) amidotransferase subunit A (Brucella suis (strain ATCC 23445 / NCTC 10510)).